A 112-amino-acid chain; its full sequence is Integration host factor subunit alpha (112 aa).

It belongs to the bacterial histone-like protein family. As to quaternary structure, heterodimer of an alpha and a beta chain.

This protein is one of the two subunits of integration host factor, a specific DNA-binding protein that functions in genetic recombination as well as in transcriptional and translational control. The protein is Integration host factor subunit alpha of Sinorhizobium fredii (strain NBRC 101917 / NGR234).